The primary structure comprises 230 residues: RING finger protein 141 (230 aa).

The N-myristoyl glycine moiety is linked to residue G2. The RING-type zinc finger occupies 155 to 192 (CCICMDGRADLILPCAHSFCQKCIDKWSDRHRNCPICR).

As to expression, isoform 1 is testis-specific. Isoform 2 is expressed in heart, brain, skeletal muscle, kidney, pancreas, lung, liver and testis. Isoform 3 is expressed in heart, liver, and kidney.

It is found in the membrane. May be involved in spermatogenesis. This Mus musculus (Mouse) protein is RING finger protein 141 (Rnf141).